Here is a 466-residue protein sequence, read N- to C-terminus: Asparagine--tRNA ligase (466 aa).

This sequence belongs to the class-II aminoacyl-tRNA synthetase family. As to quaternary structure, homodimer.

The protein resides in the cytoplasm. It catalyses the reaction tRNA(Asn) + L-asparagine + ATP = L-asparaginyl-tRNA(Asn) + AMP + diphosphate + H(+). This is Asparagine--tRNA ligase from Myxococcus xanthus (strain DK1622).